Reading from the N-terminus, the 553-residue chain is Dihydroxy-acid dehydratase (553 aa).

Asp-78 provides a ligand contact to Mg(2+). Cys-119 serves as a coordination point for [2Fe-2S] cluster. Mg(2+)-binding residues include Asp-120 and Lys-121. Residue Lys-121 is modified to N6-carboxylysine. Position 193 (Cys-193) interacts with [2Fe-2S] cluster. Glu-441 contributes to the Mg(2+) binding site. The Proton acceptor role is filled by Ser-467.

This sequence belongs to the IlvD/Edd family. As to quaternary structure, homodimer. The cofactor is [2Fe-2S] cluster. Mg(2+) serves as cofactor.

It carries out the reaction (2R)-2,3-dihydroxy-3-methylbutanoate = 3-methyl-2-oxobutanoate + H2O. The catalysed reaction is (2R,3R)-2,3-dihydroxy-3-methylpentanoate = (S)-3-methyl-2-oxopentanoate + H2O. Its pathway is amino-acid biosynthesis; L-isoleucine biosynthesis; L-isoleucine from 2-oxobutanoate: step 3/4. The protein operates within amino-acid biosynthesis; L-valine biosynthesis; L-valine from pyruvate: step 3/4. Its function is as follows. Functions in the biosynthesis of branched-chain amino acids. Catalyzes the dehydration of (2R,3R)-2,3-dihydroxy-3-methylpentanoate (2,3-dihydroxy-3-methylvalerate) into 2-oxo-3-methylpentanoate (2-oxo-3-methylvalerate) and of (2R)-2,3-dihydroxy-3-methylbutanoate (2,3-dihydroxyisovalerate) into 2-oxo-3-methylbutanoate (2-oxoisovalerate), the penultimate precursor to L-isoleucine and L-valine, respectively. In Trichlorobacter lovleyi (strain ATCC BAA-1151 / DSM 17278 / SZ) (Geobacter lovleyi), this protein is Dihydroxy-acid dehydratase.